Here is a 344-residue protein sequence, read N- to C-terminus: Selenide, water dikinase (344 aa).

The active site involves C16. Residues K19 and S47–D49 contribute to the ATP site. Residue D50 participates in Mg(2+) binding. ATP contacts are provided by residues D67, D90, and G138–S140. A Mg(2+)-binding site is contributed by D90. D226 contributes to the Mg(2+) binding site.

It belongs to the selenophosphate synthase 1 family. Class I subfamily. Homodimer. Requires Mg(2+) as cofactor.

It carries out the reaction hydrogenselenide + ATP + H2O = selenophosphate + AMP + phosphate + 2 H(+). Synthesizes selenophosphate from selenide and ATP. The sequence is that of Selenide, water dikinase from Bordetella bronchiseptica (strain ATCC BAA-588 / NCTC 13252 / RB50) (Alcaligenes bronchisepticus).